The chain runs to 142 residues: COA8 family protein CBG23705, mitochondrial (142 aa).

This sequence belongs to the COA8 family.

The protein localises to the mitochondrion inner membrane. May be required for cytochrome c complex (COX) assembly and function, COX being the terminal component of the mitochondrial respiratory chain. The sequence is that of COA8 family protein CBG23705, mitochondrial from Caenorhabditis briggsae.